Here is a 301-residue protein sequence, read N- to C-terminus: Homoserine O-acetyltransferase (301 aa).

The active-site Acyl-thioester intermediate is C142. Residues K163 and S192 each coordinate substrate. H235 acts as the Proton acceptor in catalysis. E237 is an active-site residue. Residue R249 coordinates substrate.

This sequence belongs to the MetA family.

It is found in the cytoplasm. The catalysed reaction is L-homoserine + acetyl-CoA = O-acetyl-L-homoserine + CoA. The protein operates within amino-acid biosynthesis; L-methionine biosynthesis via de novo pathway; O-acetyl-L-homoserine from L-homoserine: step 1/1. In terms of biological role, transfers an acetyl group from acetyl-CoA to L-homoserine, forming acetyl-L-homoserine. This is Homoserine O-acetyltransferase from Bacillus subtilis (strain 168).